The chain runs to 373 residues: uncharacterized protein (373 aa).

This is an uncharacterized protein from Klebsiella pneumoniae.